Consider the following 461-residue polypeptide: Argininosuccinate lyase (461 aa).

This sequence belongs to the lyase 1 family. Argininosuccinate lyase subfamily.

The protein localises to the cytoplasm. The catalysed reaction is 2-(N(omega)-L-arginino)succinate = fumarate + L-arginine. It functions in the pathway amino-acid biosynthesis; L-arginine biosynthesis; L-arginine from L-ornithine and carbamoyl phosphate: step 3/3. In Clostridium beijerinckii (strain ATCC 51743 / NCIMB 8052) (Clostridium acetobutylicum), this protein is Argininosuccinate lyase.